Here is a 297-residue protein sequence, read N- to C-terminus: Probable E3 SUMO-protein ligase RNF212 (297 aa).

An RING-type zinc finger spans residues 7 to 46 (CNRCFQPPHRTSCFSLTNCGHVYCDACLGKGKKNECLICK). Residues 91-124 (RKRLLAFYREKISRLEESLRKSVLQIEQLQSMRS) adopt a coiled-coil conformation.

It localises to the nucleus. Its subcellular location is the chromosome. The protein operates within protein modification; protein sumoylation. SUMO E3 ligase that acts as a regulator of crossing-over during meiosis: required to couple chromosome synapsis to the formation of crossover-specific recombination complexes. Localizes to recombination sites and stabilizes meiosis-specific recombination factors, such as MutS-gamma complex proteins (MSH4 and MSH5) and TEX11. May mediate sumoylation of target proteins MSH4 and/or MSH5, leading to enhance their binding to recombination sites. Acts as a limiting factor for crossover designation and/or reinforcement and plays an antagonist role with CCNB1IP1/HEI10 in the regulation of meiotic recombination. In Homo sapiens (Human), this protein is Probable E3 SUMO-protein ligase RNF212 (RNF212).